Here is a 482-residue protein sequence, read N- to C-terminus: Glutamate-rich WD repeat-containing protein 1 (482 aa).

Disordered regions lie at residues 1 to 75 (MSSK…WRAG) and 148 to 180 (QLHKTKHDDEDSDDDEDSDDDEESDDEDDEDKD). 2 stretches are compositionally biased toward acidic residues: residues 27–63 (NGEDDFENDDEVESFEDDEQSFEEIEEGGEEGGDNDG) and 157–180 (EDSDDDEDSDDDEESDDEDDEDKD). WD repeat units lie at residues 191 to 231 (NHNG…KALD), 294 to 334 (GHTE…PAIT), 337 to 377 (AHTA…DNSP), 383 to 423 (YHTG…DTEE), and 446 to 482 (QGQHDIKEVHWHPQIPHVAISTSIDGFNIFKSSNSEE).

Its subcellular location is the nucleus. The protein localises to the nucleolus. The chain is Glutamate-rich WD repeat-containing protein 1 (grwd1) from Dictyostelium discoideum (Social amoeba).